The primary structure comprises 236 residues: Phosphoribosylaminoimidazole-succinocarboxamide synthase (236 aa).

This sequence belongs to the SAICAR synthetase family.

The catalysed reaction is 5-amino-1-(5-phospho-D-ribosyl)imidazole-4-carboxylate + L-aspartate + ATP = (2S)-2-[5-amino-1-(5-phospho-beta-D-ribosyl)imidazole-4-carboxamido]succinate + ADP + phosphate + 2 H(+). The protein operates within purine metabolism; IMP biosynthesis via de novo pathway; 5-amino-1-(5-phospho-D-ribosyl)imidazole-4-carboxamide from 5-amino-1-(5-phospho-D-ribosyl)imidazole-4-carboxylate: step 1/2. The chain is Phosphoribosylaminoimidazole-succinocarboxamide synthase from Rickettsia canadensis (strain McKiel).